A 94-amino-acid polypeptide reads, in one-letter code: Putative pterin-4-alpha-carbinolamine dehydratase (94 aa).

This sequence belongs to the pterin-4-alpha-carbinolamine dehydratase family.

It catalyses the reaction (4aS,6R)-4a-hydroxy-L-erythro-5,6,7,8-tetrahydrobiopterin = (6R)-L-erythro-6,7-dihydrobiopterin + H2O. The protein is Putative pterin-4-alpha-carbinolamine dehydratase of Mycolicibacterium smegmatis (strain ATCC 700084 / mc(2)155) (Mycobacterium smegmatis).